The chain runs to 399 residues: Stage III sporulation protein AE (399 aa).

The N-terminal stretch at 1-24 is a signal peptide; it reads MKRFQWVLLLAVLIIAGRAEIVQA. The next 7 helical transmembrane spans lie at 104 to 124, 140 to 160, 172 to 192, 209 to 229, 248 to 268, 315 to 335, and 368 to 388; these read VLAN…CVIL, AYSI…HVAI, SFIL…GGAV, GLLI…LSIV, IAIG…SVQG, VGIL…IKVL, and IYIF…LTVI.

As to quaternary structure, interacts with SpoIIIJ and YqjG.

It is found in the cell membrane. Its function is as follows. Required during sporulation for activation of sigma factor SpoIIIG/SigG after engulfment is completed in the prespore. Overexpression in the absence of SpoIIIJ is synthetically lethal. This is Stage III sporulation protein AE (spoIIIAE) from Bacillus subtilis (strain 168).